The chain runs to 102 residues: Citrate lyase acyl carrier protein (102 aa).

Ser-14 carries the post-translational modification O-(phosphoribosyl dephospho-coenzyme A)serine.

The protein belongs to the CitD family. Oligomer with a subunit composition of (alpha,beta,gamma)6.

Its subcellular location is the cytoplasm. Its function is as follows. Covalent carrier of the coenzyme of citrate lyase. This is Citrate lyase acyl carrier protein from Streptococcus equi subsp. equi (strain 4047).